Here is a 219-residue protein sequence, read N- to C-terminus: Small ribosomal subunit protein uS3 (219 aa).

The KH type-2 domain maps to 41–110 (IRKIINTEYS…DVSINICEVK (70 aa)).

This sequence belongs to the universal ribosomal protein uS3 family. In terms of assembly, part of the 30S ribosomal subunit. Forms a tight complex with proteins S10 and S14.

Its function is as follows. Binds the lower part of the 30S subunit head. Binds mRNA in the 70S ribosome, positioning it for translation. The sequence is that of Small ribosomal subunit protein uS3 from Orientia tsutsugamushi (strain Ikeda) (Rickettsia tsutsugamushi).